Reading from the N-terminus, the 407-residue chain is Probable cysteine protease atg4 (407 aa).

The Nucleophile role is filled by Cys136. Catalysis depends on residues Asp310 and His312.

Belongs to the peptidase C54 family.

It localises to the cytoplasm. The protein localises to the nucleus. The protein resides in the preautophagosomal structure. It carries out the reaction [protein]-C-terminal L-amino acid-glycyl-phosphatidylethanolamide + H2O = [protein]-C-terminal L-amino acid-glycine + a 1,2-diacyl-sn-glycero-3-phosphoethanolamine. Cysteine protease that is required for autophagy. Plays a key role in cytoplasm to vacuole transport (Cvt) and autophagy by mediating both proteolytic activation and delipidation of atg8. The protease activity is required for proteolytic activation of atg8 by the cleavage of the C-terminal amino acid of atg8 to reveal a C-terminal glycine. Azg8 ubiquitin-like activity requires the exposure of the glycine at the C-terminus for its conjugation to phosphatidylethanolamine (PE) and its insertion to membranes, which is necessary for autophagy. The atg8-PE conjugate mediates tethering between adjacent membranes and stimulates membrane hemifusion, leading to expansion of the autophagosomal membrane during autophagy. In addition to the protease activity, also catalyzes deconjugation of PE-conjugated forms of atg8 during macroautophagy since atg8 delipidation is required to release the protein from membranes, which facilitates multiple events during macroautophagy, and especially for efficient autophagosome biogenesis, the assembly of atg99-containing tubulovesicular clusters into phagophores/autophagosomes, and for the disassembly of PAS-associated ATG components. Atg8 delipidation by atg4 also recycles atg8-PE generated on inappropriate membranes to maintain a reservoir of unlipidated atg8 that is required for autophagosome formation at the PAS. In Aspergillus oryzae (strain ATCC 42149 / RIB 40) (Yellow koji mold), this protein is Probable cysteine protease atg4.